Consider the following 136-residue polypeptide: NHL-repeat-containing protein 4 (136 aa).

NHL repeat units lie at residues 48-91 and 93-132; these read QPLG…FPRV and PPIC…YQYL.

The polypeptide is NHL-repeat-containing protein 4 (Nhlrc4) (Mus musculus (Mouse)).